Consider the following 258-residue polypeptide: 2S seed storage albumin protein (258 aa).

A signal peptide spans 1–24; sequence MAKLIPTIALVSVLLFIIANASFA. Residues 25 to 35 constitute a propeptide that is removed on maturation; that stretch reads YRTTITTIEID. Cystine bridges form between cysteine 49-cysteine 108, cysteine 61-cysteine 97, cysteine 98-cysteine 145, and cysteine 110-cysteine 149. A disordered region spans residues 64-87; it reads YLRQSSSRRSPGEEVLRMPGDENQ. Position 69 is a phosphoserine (serine 69). Basic and acidic residues predominate over residues 73-83; the sequence is SPGEEVLRMPG. Residues 77–86 constitute a propeptide that is removed on maturation; that stretch reads EVLRMPGDEN. A Pyrrolidone carboxylic acid modification is found at glutamine 87. 2 propeptides span residues 154 to 156 and 191 to 193; these read RTN and SDN. Cystine bridges form between cysteine 162–cysteine 212, cysteine 175–cysteine 201, cysteine 202–cysteine 249, and cysteine 214–cysteine 256. Glutamine 194 carries the post-translational modification Pyrrolidone carboxylic acid.

It belongs to the 2S seed storage albumins family. In terms of assembly, the 2 mature proteins consist of heterodimers of a small and a large chain; disulfide-linked. Post-translationally, the N-terminus of both large chains is blocked. The C-terminus of the allergen Ric c 1 and allergen Ric c 3 small chains are heterogeneous and the length of the chains can vary from 33 to 36 amino acids and from 36 to 40 amino acids respectively.

2S seed storage proteins. This chain is 2S seed storage albumin protein, found in Ricinus communis (Castor bean).